The primary structure comprises 85 residues: Small integral membrane protein 2 (85 aa).

A helical transmembrane segment spans residues 21 to 43 (GHAISILFGFWTSFICDTYIVLA). The interval 51–85 (SPDVSASSDEPYARIQQSRRQCHAEEDQSQVPEAG) is disordered.

It is found in the membrane. The chain is Small integral membrane protein 2 (SMIM2) from Homo sapiens (Human).